A 416-amino-acid chain; its full sequence is Choline/ethanolaminephosphotransferase 1 (416 aa).

The segment at 1–20 (MSGHRSTRKRCGDSHPESPV) is disordered. The residue at position 18 (serine 18) is a Phosphoserine. Phosphothreonine is present on threonine 40. Residue asparagine 86 participates in CDP-choline binding. The next 2 membrane-spanning stretches (helical) occupy residues 89–108 (TIIG…FYCP) and 116–133 (LWAY…QSLD). Aspartate 133 contributes to the Mg(2+) binding site. Residue asparagine 144 is glycosylated (N-linked (GlcNAc...) asparagine). Glutamate 151 serves as a coordination point for CDP-choline. Residue aspartate 154 coordinates Mg(2+). Histidine 155 acts as the Proton acceptor in catalysis. A run of 8 helical transmembrane segments spans residues 156–176 (GCDS…VQLG), 180–199 (DWMF…AHWQ), 210–230 (IIDV…AVIG), 246–267 (MKLL…NYFR), 286–306 (VLSP…IYKK), 315–334 (HPCL…TNKL), 349–363 (TAFI…DQYF), and 368–388 (DEYI…IRYC). Position 158 (aspartate 158) interacts with Mg(2+).

Belongs to the CDP-alcohol phosphatidyltransferase class-I family. Homodimer. Requires Mg(2+) as cofactor. Mn(2+) serves as cofactor.

The protein resides in the endoplasmic reticulum membrane. The protein localises to the nucleus membrane. It catalyses the reaction CDP-ethanolamine + a 1,2-diacyl-sn-glycerol = a 1,2-diacyl-sn-glycero-3-phosphoethanolamine + CMP + H(+). The catalysed reaction is CDP-choline + a 1,2-diacyl-sn-glycerol = a 1,2-diacyl-sn-glycero-3-phosphocholine + CMP + H(+). The enzyme catalyses 1-O-alkyl-2-acyl-sn-glycerol + CDP-choline = a 1-O-alkyl-2-acyl-sn-glycero-3-phosphocholine + CMP + H(+). It carries out the reaction a 1-O-(1Z-alkenyl)-2-acyl-sn-glycerol + CDP-choline = a 1-O-(1Z-alkenyl)-2-acyl-sn-glycero-3-phosphocholine + CMP + H(+). It catalyses the reaction 1,2-dioctanoyl-sn-glycerol + CDP-choline = 1,2-dioctanoyl-sn-glycero-3-phosphocholine + CMP + H(+). The catalysed reaction is 1,2-didecanoyl-sn-glycerol + CDP-choline = 1,2-didecanoyl-sn-glycero-3-phosphocholine + CMP + H(+). The enzyme catalyses CDP-choline + 1,2-di-(9Z-octadecenoyl)-sn-glycerol = 1,2-di-(9Z-octadecenoyl)-sn-glycero-3-phosphocholine + CMP + H(+). It carries out the reaction 1-hexadecanoyl-2-(9Z-octadecenoyl)-sn-glycerol + CDP-choline = 1-hexadecanoyl-2-(9Z-octadecenoyl)-sn-glycero-3-phosphocholine + CMP + H(+). It catalyses the reaction CDP-ethanolamine + 1,2-di-(9Z-octadecenoyl)-sn-glycerol = 1,2-di-(9Z-octadecenoyl)-sn-glycero-3-phosphoethanolamine + CMP + H(+). The catalysed reaction is 1-hexadecanoyl-2-(9Z-octadecenoyl)-sn-glycerol + CDP-ethanolamine = 1-hexadecanoyl-2-(9Z-octadecenoyl)-sn-glycero-3-phosphoethanolamine + CMP + H(+). The enzyme catalyses 1-hexadecanoyl-2-(4Z,7Z,10Z,13Z,16Z,19Z-docosahexaenoyl)-sn-glycerol + CDP-choline = 1-hexadecanoyl-2-(4Z,7Z,10Z,13Z,16Z,19Z-docosahexaenoyl)-sn-glycero-3-phosphocholine + CMP + H(+). It carries out the reaction 1,2-di-(9Z-hexadecenoyl)-sn-glycerol + CDP-choline = 1,2-di-(9Z-hexadecenoyl)-sn-glycero-3-phosphocholine + CMP + H(+). It catalyses the reaction 1,2-di-(9Z-hexadecenoyl)-sn-glycerol + CDP-ethanolamine = 1,2-di-(9Z-hexadecenoyl)-sn-glycero-3-phosphoethanolamine + CMP + H(+). The catalysed reaction is 1-O-hexadecyl-2-acetyl-sn-glycerol + CDP-choline = 1-O-hexadecyl-2-acetyl-sn-glycero-3-phosphocholine + CMP + H(+). The enzyme catalyses 1-O-hexadecyl-2-(5Z,8Z,11Z,14Z-eicosatetraenoyl)-sn-glycerol + CDP-choline = 1-O-hexadecyl-2-(5Z,8Z,11Z,14Z)-eicosatetraenoyl-sn-glycero-3-phosphocholine + CMP + H(+). It participates in phospholipid metabolism; phosphatidylethanolamine biosynthesis; phosphatidylethanolamine from ethanolamine: step 3/3. It functions in the pathway phospholipid metabolism; phosphatidylcholine biosynthesis; phosphatidylcholine from phosphocholine: step 2/2. In terms of biological role, catalyzes both phosphatidylcholine and phosphatidylethanolamine biosynthesis from CDP-choline and CDP-ethanolamine, respectively. Involved in protein-dependent process of phospholipid transport to distribute phosphatidyl choline to the lumenal surface. Has a higher cholinephosphotransferase activity than ethanolaminephosphotransferase activity. The polypeptide is Choline/ethanolaminephosphotransferase 1 (Mus musculus (Mouse)).